Here is a 443-residue protein sequence, read N- to C-terminus: Thymidine phosphorylase (443 aa).

It belongs to the thymidine/pyrimidine-nucleoside phosphorylase family. As to quaternary structure, homodimer.

The catalysed reaction is thymidine + phosphate = 2-deoxy-alpha-D-ribose 1-phosphate + thymine. It participates in pyrimidine metabolism; dTMP biosynthesis via salvage pathway; dTMP from thymine: step 1/2. Its function is as follows. The enzymes which catalyze the reversible phosphorolysis of pyrimidine nucleosides are involved in the degradation of these compounds and in their utilization as carbon and energy sources, or in the rescue of pyrimidine bases for nucleotide synthesis. The protein is Thymidine phosphorylase of Shewanella baltica (strain OS155 / ATCC BAA-1091).